Reading from the N-terminus, the 406-residue chain is Argininosuccinate synthase (406 aa).

ATP contacts are provided by residues 13–21 (AYSGGLDTS) and Ala40. The L-citrulline site is built by Tyr91 and Ser96. Gly121 serves as a coordination point for ATP. L-aspartate is bound by residues Thr123, Asn127, and Asp128. Residue Asn127 coordinates L-citrulline. L-citrulline is bound by residues Arg131, Ser182, Ser191, Glu267, and Tyr279.

The protein belongs to the argininosuccinate synthase family. Type 1 subfamily. Homotetramer.

The protein localises to the cytoplasm. The catalysed reaction is L-citrulline + L-aspartate + ATP = 2-(N(omega)-L-arginino)succinate + AMP + diphosphate + H(+). It functions in the pathway amino-acid biosynthesis; L-arginine biosynthesis; L-arginine from L-ornithine and carbamoyl phosphate: step 2/3. The sequence is that of Argininosuccinate synthase from Brucella suis biovar 1 (strain 1330).